The chain runs to 109 residues: T cell receptor alpha variable 25 (109 aa).

The first 19 residues, 1-19 (MLLITSMLVLWMQLSQVNG), serve as a signal peptide directing secretion. The Ig-like domain occupies 20–109 (QQVMQIPQYQ…TDVGTYFCAG (90 aa)). A disulfide bridge connects residues C41 and C107. Residues N42 and N89 are each glycosylated (N-linked (GlcNAc...) asparagine).

In terms of assembly, alpha-beta TR is a heterodimer composed of an alpha and beta chain; disulfide-linked. The alpha-beta TR is associated with the transmembrane signaling CD3 coreceptor proteins to form the TR-CD3 (TcR or TCR). The assembly of alpha-beta TR heterodimers with CD3 occurs in the endoplasmic reticulum where a single alpha-beta TR heterodimer associates with one CD3D-CD3E heterodimer, one CD3G-CD3E heterodimer and one CD247 homodimer forming a stable octameric structure. CD3D-CD3E and CD3G-CD3E heterodimers preferentially associate with TR alpha and TR beta chains, respectively. The association of the CD247 homodimer is the last step of TcR assembly in the endoplasmic reticulum and is required for transport to the cell surface.

It is found in the cell membrane. In terms of biological role, v region of the variable domain of T cell receptor (TR) alpha chain that participates in the antigen recognition. Alpha-beta T cell receptors are antigen specific receptors which are essential to the immune response and are present on the cell surface of T lymphocytes. Recognize peptide-major histocompatibility (MH) (pMH) complexes that are displayed by antigen presenting cells (APC), a prerequisite for efficient T cell adaptive immunity against pathogens. Binding of alpha-beta TR to pMH complex initiates TR-CD3 clustering on the cell surface and intracellular activation of LCK that phosphorylates the ITAM motifs of CD3G, CD3D, CD3E and CD247 enabling the recruitment of ZAP70. In turn ZAP70 phosphorylates LAT, which recruits numerous signaling molecules to form the LAT signalosome. The LAT signalosome propagates signal branching to three major signaling pathways, the calcium, the mitogen-activated protein kinase (MAPK) kinase and the nuclear factor NF-kappa-B (NF-kB) pathways, leading to the mobilization of transcription factors that are critical for gene expression and essential for T cell growth and differentiation. The T cell repertoire is generated in the thymus, by V-(D)-J rearrangement. This repertoire is then shaped by intrathymic selection events to generate a peripheral T cell pool of self-MH restricted, non-autoaggressive T cells. Post-thymic interaction of alpha-beta TR with the pMH complexes shapes TR structural and functional avidity. The polypeptide is T cell receptor alpha variable 25 (Homo sapiens (Human)).